A 153-amino-acid polypeptide reads, in one-letter code: Aspartate carbamoyltransferase regulatory chain (153 aa).

Residues C109, C114, C138, and C141 each contribute to the Zn(2+) site.

Belongs to the PyrI family. As to quaternary structure, contains catalytic and regulatory chains. Zn(2+) serves as cofactor.

In terms of biological role, involved in allosteric regulation of aspartate carbamoyltransferase. This is Aspartate carbamoyltransferase regulatory chain from Edwardsiella ictaluri (strain 93-146).